The following is a 177-amino-acid chain: Endoribonuclease YbeY (177 aa).

3 residues coordinate Zn(2+): His142, His146, and His152.

The protein belongs to the endoribonuclease YbeY family. It depends on Zn(2+) as a cofactor.

The protein localises to the cytoplasm. Functionally, single strand-specific metallo-endoribonuclease involved in late-stage 70S ribosome quality control and in maturation of the 3' terminus of the 16S rRNA. In Synechococcus sp. (strain CC9311), this protein is Endoribonuclease YbeY.